A 180-amino-acid chain; its full sequence is Signal peptidase complex subunit 3 (180 aa).

Topologically, residues M1–L11 are cytoplasmic. Residues F12–F32 form a helical; Signal-anchor for type II membrane protein membrane-spanning segment. Topologically, residues K33–Y180 are lumenal. N141 is a glycosylation site (N-linked (GlcNAc...) asparagine).

It belongs to the SPCS3 family. In terms of assembly, component of the signal peptidase complex paralog A (SPC-A) composed of a catalytic subunit SEC11A and three accessory subunits SPCS1, SPCS2 and SPCS3. Component of the signal peptidase complex paralog C (SPC-C) composed of a catalytic subunit SEC11C and three accessory subunits SPCS1, SPCS2 and SPCS3. The complex induces a local thinning of the ER membrane which is used to measure the length of the signal peptide (SP) h-region of protein substrates. This ensures the selectivity of the complex towards h-regions shorter than 18-20 amino acids. Expressed in hen oviduct (at protein level).

Its subcellular location is the endoplasmic reticulum membrane. Essential component of the signal peptidase complex (SPC) which catalyzes the cleavage of N-terminal signal sequences from nascent proteins as they are translocated into the lumen of the endoplasmic reticulum. Essential for the SPC catalytic activity, possibly by stabilizing and positioning the active center of the complex close to the lumenal surface. This is Signal peptidase complex subunit 3 from Gallus gallus (Chicken).